We begin with the raw amino-acid sequence, 423 residues long: Adenylosuccinate synthetase (423 aa).

Residues 12-18 (GDEGKGK) and 40-42 (GHT) contribute to the GTP site. Aspartate 13 functions as the Proton acceptor in the catalytic mechanism. Mg(2+) contacts are provided by aspartate 13 and glycine 40. Residues 13 to 16 (DEGK), 38 to 41 (NAGH), threonine 129, arginine 143, glutamine 221, threonine 236, and arginine 300 each bind IMP. The Proton donor role is filled by histidine 41. 296-302 (SVTGRKR) contacts substrate. GTP is bound by residues arginine 302 and 408 to 410 (SVG).

Belongs to the adenylosuccinate synthetase family. As to quaternary structure, homodimer. The cofactor is Mg(2+).

Its subcellular location is the cytoplasm. The catalysed reaction is IMP + L-aspartate + GTP = N(6)-(1,2-dicarboxyethyl)-AMP + GDP + phosphate + 2 H(+). It functions in the pathway purine metabolism; AMP biosynthesis via de novo pathway; AMP from IMP: step 1/2. Plays an important role in the de novo pathway of purine nucleotide biosynthesis. Catalyzes the first committed step in the biosynthesis of AMP from IMP. This Bacteroides thetaiotaomicron (strain ATCC 29148 / DSM 2079 / JCM 5827 / CCUG 10774 / NCTC 10582 / VPI-5482 / E50) protein is Adenylosuccinate synthetase.